Consider the following 446-residue polypeptide: Exodeoxyribonuclease 7 large subunit (446 aa).

The protein belongs to the XseA family. As to quaternary structure, heterooligomer composed of large and small subunits.

The protein resides in the cytoplasm. It catalyses the reaction Exonucleolytic cleavage in either 5'- to 3'- or 3'- to 5'-direction to yield nucleoside 5'-phosphates.. Its function is as follows. Bidirectionally degrades single-stranded DNA into large acid-insoluble oligonucleotides, which are then degraded further into small acid-soluble oligonucleotides. The polypeptide is Exodeoxyribonuclease 7 large subunit (Streptococcus pneumoniae serotype 4 (strain ATCC BAA-334 / TIGR4)).